We begin with the raw amino-acid sequence, 221 residues long: 7-cyano-7-deazaguanine synthase (221 aa).

Residue 10 to 20 (FSGGQDSTTCL) participates in ATP binding. Zn(2+) is bound by residues cysteine 186, cysteine 195, cysteine 198, and cysteine 201.

This sequence belongs to the QueC family. In terms of assembly, homodimer. Requires Zn(2+) as cofactor.

The enzyme catalyses 7-carboxy-7-deazaguanine + NH4(+) + ATP = 7-cyano-7-deazaguanine + ADP + phosphate + H2O + H(+). The protein operates within purine metabolism; 7-cyano-7-deazaguanine biosynthesis. In terms of biological role, catalyzes the ATP-dependent conversion of 7-carboxy-7-deazaguanine (CDG) to 7-cyano-7-deazaguanine (preQ(0)). This is 7-cyano-7-deazaguanine synthase from Geobacillus kaustophilus (strain HTA426).